The following is a 609-amino-acid chain: Neutral protease (609 aa).

A signal peptide spans 1-24 (MNKTQRHINWLLAVSAATALPVTA). Residues 25-196 (AEMINVNDGS…VLQTWDGLNH (172 aa)) constitute a propeptide that is removed on maturation. His343 is a binding site for Zn(2+). Residue Glu344 is part of the active site. Positions 347 and 367 each coordinate Zn(2+). The active-site Proton donor is His426.

It belongs to the peptidase M4 family. The cofactor is Zn(2+).

The protein localises to the secreted. It catalyses the reaction Preferential cleavage of bonds with bulky hydrophobic groups in P2 and P1'. Phe at P1' is the most favored residue, which distinguished this enzyme from thermolysin.. In terms of biological role, extracellular zinc metalloprotease. This Vibrio proteolyticus (Aeromonas proteolytica) protein is Neutral protease (nprV).